The following is a 2220-amino-acid chain: Calcineurin-binding protein cabin-1 (2220 aa).

Phosphoserine is present on residues Ser10 and Ser11. At Thr12 the chain carries Phosphothreonine. A phosphoserine mark is found at Ser20 and Ser66. TPR repeat units follow at residues 36–69 (AFALYHKALDLQKHDRFEESAKAYHELLEASLLR), 90–123 (YSTYKNLAQLAAQREDLETAMEFYLEAVMLDSTD), and 125–157 (NLWYKIGHVALRLIRIPLARHAFEEGLRCNPDH). Residues 361-400 (GAPVGDISGGDKSKKGVKRKKISEESGETAKRRSARVRNT) form a disordered region. Residues 382–391 (ISEESGETAK) are compositionally biased toward basic and acidic residues. A phosphoserine mark is found at Ser433 and Ser450. A TPR 4 repeat occupies 615–648 (VRVYWLKARFLALQGDMEQALENYDICTEMLQSS). Ser673 is modified (phosphoserine). 2 TPR repeats span residues 1055 to 1088 (NELYYLLADYHFKNKEQSKAIKFYMHDICICPNR) and 1106 to 1139 (KLNSNELKSDGPIWKHATPVLNCFRRALEIDSSN). Disordered stretches follow at residues 1299 to 1476 (FARG…STPT), 1668 to 1845 (AEGS…RLSR), 1916 to 2165 (AQRQ…GSIS), and 2197 to 2220 (VLETSSQESSLESETDEDDDYMDI). Over residues 1301 to 1324 (RGEEKNTPKASEKEKACLVDEDSH) the composition is skewed to basic and acidic residues. Residues 1327–1349 (AGTLPGPGASLPSSSGPGLTSPP) show a composition bias toward low complexity. Polar residues predominate over residues 1377–1397 (DSTAVALSDSSSTQDFFNEPT). Over residues 1402-1412 (GSRKSYTEKRL) the composition is skewed to basic and acidic residues. Phosphoserine is present on Ser1439. Gly residues predominate over residues 1715-1725 (SGPGPEPGGKV). 2 stretches are compositionally biased toward basic and acidic residues: residues 1744-1753 (SGERKDKESP) and 1784-1794 (PARDRGPESRP). Residues 1812–1823 (PLTPAQPAPAPA) show a composition bias toward pro residues. Composition is skewed to polar residues over residues 1918–1927 (RQASGDTPTT) and 1975–1989 (TIITCPPSASASTLD). Phosphothreonine is present on Thr1924. Basic and acidic residues predominate over residues 2070 to 2081 (GKLRPEPRRDGE). Residues 2091 to 2112 (PLSSPPTAASSKAPSSGSAQPP) show a composition bias toward low complexity. Position 2094 is a phosphoserine (Ser2094). The required for interaction with calcineurin stretch occupies residues 2116-2153 (PGKPEPSRAKSRPLPNMPKLVIPSAATKFPPEITVTPP). Thr2151 and Thr2154 each carry phosphothreonine. Acidic residues predominate over residues 2207-2220 (LESETDEDDDYMDI).

As to quaternary structure, component of a complex that includes at least ASF1A, CABIN1, HIRA, histone H3.3 and UBN1. Interacts with calcineurin. Interacts with MEF2B. Activated through PKC-mediated hyperphosphorylation. Phosphorylation by the DNA damage kinases ATM and CHK2 enhances ubiquitination. Post-translationally, upon genotoxic stress, ubiquitination by the DCX(DDB2) E3 ubiquitin-protein ligase complex targets CABIN1 for proteasomal degradation, leading to the release of p53/TP53. Widely expressed in different tissues.

It is found in the nucleus. In terms of biological role, may be required for replication-independent chromatin assembly. May serve as a negative regulator of T-cell receptor (TCR) signaling via inhibition of calcineurin. Inhibition of activated calcineurin is dependent on both PKC and calcium signals. Acts as a negative regulator of p53/TP53 by keeping p53 in an inactive state on chromatin at promoters of a subset of it's target genes. The polypeptide is Calcineurin-binding protein cabin-1 (CABIN1) (Homo sapiens (Human)).